We begin with the raw amino-acid sequence, 285 residues long: Probable endonuclease 4 (285 aa).

Residues His-69, His-109, Glu-145, Asp-179, His-182, His-216, Asp-229, His-231, and Glu-261 each contribute to the Zn(2+) site.

Belongs to the AP endonuclease 2 family. Zn(2+) is required as a cofactor.

The enzyme catalyses Endonucleolytic cleavage to 5'-phosphooligonucleotide end-products.. Functionally, endonuclease IV plays a role in DNA repair. It cleaves phosphodiester bonds at apurinic or apyrimidinic (AP) sites, generating a 3'-hydroxyl group and a 5'-terminal sugar phosphate. In Salmonella paratyphi A (strain AKU_12601), this protein is Probable endonuclease 4.